A 224-amino-acid chain; its full sequence is tRNA (guanine-N(7)-)-methyltransferase (224 aa).

Residues Glu54, Glu79, Glu106, and Asp129 each contribute to the S-adenosyl-L-methionine site. Asp129 is a catalytic residue. Substrate is bound by residues Lys133 and Asp165.

Belongs to the class I-like SAM-binding methyltransferase superfamily. TrmB family.

It catalyses the reaction guanosine(46) in tRNA + S-adenosyl-L-methionine = N(7)-methylguanosine(46) in tRNA + S-adenosyl-L-homocysteine. It functions in the pathway tRNA modification; N(7)-methylguanine-tRNA biosynthesis. Functionally, catalyzes the formation of N(7)-methylguanine at position 46 (m7G46) in tRNA. The polypeptide is tRNA (guanine-N(7)-)-methyltransferase (Chlamydia trachomatis serovar D (strain ATCC VR-885 / DSM 19411 / UW-3/Cx)).